Here is a 206-residue protein sequence, read N- to C-terminus: Purine nucleoside phosphorylase aq_167 (206 aa).

His-42, Cys-78, and His-93 together coordinate Zn(2+).

It belongs to the purine nucleoside phosphorylase YfiH/LACC1 family. As to quaternary structure, homodimer. The cofactor is Cu(2+). Zn(2+) serves as cofactor.

It catalyses the reaction adenosine + phosphate = alpha-D-ribose 1-phosphate + adenine. It carries out the reaction S-methyl-5'-thioadenosine + phosphate = 5-(methylsulfanyl)-alpha-D-ribose 1-phosphate + adenine. The catalysed reaction is inosine + phosphate = alpha-D-ribose 1-phosphate + hypoxanthine. The enzyme catalyses adenosine + H2O + H(+) = inosine + NH4(+). Its function is as follows. Purine nucleoside enzyme that catalyzes the phosphorolysis of adenosine and inosine nucleosides, yielding D-ribose 1-phosphate and the respective free bases, adenine and hypoxanthine. Also catalyzes the phosphorolysis of S-methyl-5'-thioadenosine into adenine and S-methyl-5-thio-alpha-D-ribose 1-phosphate. Also has adenosine deaminase activity. The sequence is that of Purine nucleoside phosphorylase aq_167 from Aquifex aeolicus (strain VF5).